The sequence spans 416 residues: Cytochrome P450 monooxygenase PikC (416 aa).

Residues Glu94, 187–191 (AQTAM), and 238–246 (HILLVAGHE) each bind substrate. Cys354 is a binding site for heme.

The protein belongs to the cytochrome P450 family. It depends on heme as a cofactor.

The catalysed reaction is narbomycin + 2 reduced [2Fe-2S]-[ferredoxin] + O2 + 2 H(+) = pikromycin + 2 oxidized [2Fe-2S]-[ferredoxin] + H2O. It carries out the reaction narbomycin + 2 reduced [2Fe-2S]-[ferredoxin] + O2 + 2 H(+) = neopikromycin + 2 oxidized [2Fe-2S]-[ferredoxin] + H2O. The enzyme catalyses narbomycin + 4 reduced [2Fe-2S]-[ferredoxin] + 2 O2 + 4 H(+) = novapikromycin + 4 oxidized [2Fe-2S]-[ferredoxin] + 2 H2O. It catalyses the reaction 10-deoxymethymycin + 2 reduced [2Fe-2S]-[ferredoxin] + O2 + 2 H(+) = methymycin + 2 oxidized [2Fe-2S]-[ferredoxin] + H2O. The catalysed reaction is 10-deoxymethymycin + 2 reduced [2Fe-2S]-[ferredoxin] + O2 + 2 H(+) = neomethymycin + 2 oxidized [2Fe-2S]-[ferredoxin] + H2O. It carries out the reaction 10-deoxymethymycin + 4 reduced [2Fe-2S]-[ferredoxin] + 2 O2 + 4 H(+) = novamethymycin + 4 oxidized [2Fe-2S]-[ferredoxin] + 2 H2O. Its pathway is antibiotic biosynthesis. Catalyzes the hydroxylation of narbomycin to give rise to pikromycin, and of 10-deoxymethymycin (YC-17) to give rise to methymycin and neomethymycin during macrolide antibiotic biosynthesis. In addition, produces low amounts of neopicromycin, novapikromycin and novamethymycin. Requires the participation of a ferredoxin and a ferredoxin reductase for the transfer of electrons from NADPH to the monooxygenase. The chain is Cytochrome P450 monooxygenase PikC from Streptomyces venezuelae.